Here is a 359-residue protein sequence, read N- to C-terminus: WAT1-related protein At4g16620 (359 aa).

Transmembrane regions (helical) follow at residues 5-25, 41-61, 77-97, 105-125, 143-163, 183-203, 206-226, 246-266, 279-299, and 305-325; these read ETLI…IYAG, LLIV…LAFL, IKLV…FLEG, MATA…WAAG, TVLC…TATL, ILGC…IVLQ, ILAE…MGGI, VIGL…SGGG, PVIV…VSAF, and FNLG…FVLW. The EamA 1 domain maps to 30–154; it reads LSQLLSLGID…LCVMGALIMS (125 aa). An EamA 2 domain is found at 206–324; that stretch reads ILAEFPAPIS…LMFGGLYFVL (119 aa).

The protein belongs to the drug/metabolite transporter (DMT) superfamily. Plant drug/metabolite exporter (P-DME) (TC 2.A.7.4) family.

The protein localises to the membrane. The chain is WAT1-related protein At4g16620 from Arabidopsis thaliana (Mouse-ear cress).